Here is a 156-residue protein sequence, read N- to C-terminus: 2-C-methyl-D-erythritol 2,4-cyclodiphosphate synthase (156 aa).

A divalent metal cation-binding residues include Asp-9 and His-11. Residues 9-11 (DAH) and 36-37 (HS) each bind 4-CDP-2-C-methyl-D-erythritol 2-phosphate. His-44 contacts a divalent metal cation. 58-60 (NIG) contacts 4-CDP-2-C-methyl-D-erythritol 2-phosphate.

This sequence belongs to the IspF family. Homotrimer. It depends on a divalent metal cation as a cofactor.

The enzyme catalyses 4-CDP-2-C-methyl-D-erythritol 2-phosphate = 2-C-methyl-D-erythritol 2,4-cyclic diphosphate + CMP. It functions in the pathway isoprenoid biosynthesis; isopentenyl diphosphate biosynthesis via DXP pathway; isopentenyl diphosphate from 1-deoxy-D-xylulose 5-phosphate: step 4/6. Involved in the biosynthesis of isopentenyl diphosphate (IPP) and dimethylallyl diphosphate (DMAPP), two major building blocks of isoprenoid compounds. Catalyzes the conversion of 4-diphosphocytidyl-2-C-methyl-D-erythritol 2-phosphate (CDP-ME2P) to 2-C-methyl-D-erythritol 2,4-cyclodiphosphate (ME-CPP) with a corresponding release of cytidine 5-monophosphate (CMP). The chain is 2-C-methyl-D-erythritol 2,4-cyclodiphosphate synthase from Kosmotoga olearia (strain ATCC BAA-1733 / DSM 21960 / TBF 19.5.1).